The primary structure comprises 151 residues: Small ribosomal subunit protein uS15 (151 aa).

The tract at residues 1–20 (MARLHSGKRGSSGSTRPLRT) is disordered.

This sequence belongs to the universal ribosomal protein uS15 family. As to quaternary structure, part of the 30S ribosomal subunit.

This Methanococcus aeolicus (strain ATCC BAA-1280 / DSM 17508 / OCM 812 / Nankai-3) protein is Small ribosomal subunit protein uS15.